We begin with the raw amino-acid sequence, 93 residues long: MPRSLKKGPFVDDHLLRKVISANEASSKNVIKTWSRRSMIIPAMLGHTIAVHDGRKHVPVFVTESMVGHKLGEFALTRTFRGHVKDDKKGRRR.

It belongs to the universal ribosomal protein uS19 family.

Its function is as follows. Protein S19 forms a complex with S13 that binds strongly to the 16S ribosomal RNA. The sequence is that of Small ribosomal subunit protein uS19 from Clavibacter michiganensis subsp. michiganensis (strain NCPPB 382).